Reading from the N-terminus, the 1064-residue chain is Serine protease inhibitor Kazal-type 5 (1064 aa).

Residues 1-22 form the signal peptide; sequence MKIATVSVLLPLALCLIQDAAS. In terms of domain architecture, Kazal-like 1; atypical spans 28–66; it reads EMCHEFQAFMKNGKLFCPQDKKFFQSLDGIMFINKCATC. Intrachain disulfides connect Cys30-Cys66, Cys44-Cys63, Cys97-Cys133, Cys111-Cys130, Cys119-Cys151, Cys161-Cys197, Cys175-Cys194, Cys225-Cys261, Cys239-Cys258, Cys297-Cys333, Cys311-Cys330, Cys367-Cys403, Cys381-Cys400, Cys437-Cys473, Cys451-Cys470, Cys496-Cys532, Cys510-Cys529, Cys567-Cys603, Cys581-Cys600, Cys632-Cys668, and Cys646-Cys665. Kazal-like domains are found at residues 91-153, 155-216, 219-285, 291-352, 361-423, 431-489, 490-551, 561-622, 626-688, 701-757, 768-830, 843-905, 910-971, and 987-1048; these read APTE…ECKS, NPEQ…ETRI, NAEK…KAEE, REIV…ARAR, TSYA…KSRN, ASFE…KAKR, EAAK…EEKG, EAVQ…PRAK, EAEK…EDQR, GNTQ…KNEY, ESGK…EDRS, NDKE…EKSS, NNAK…EKPS, and SLDS…KCEE. The segment covering 676–688 has biased composition (basic and acidic residues); the sequence is NEERKRKEEEDQR. The segment at 676-705 is disordered; it reads NEERKRKEEEDQRNAAGHGSSGGGGGNTQD. 6 disulfide bridges follow: Cys707–Cys743, Cys721–Cys740, Cys774–Cys810, Cys788–Cys807, Cys849–Cys885, and Cys863–Cys882. Residues 751-775 form a disordered region; it reads AERKNEYSRSRSNGTGSESGKDTCD. A disordered region spans residues 818-849; the sequence is AAEKKKKEDEDRSNTGERSNTGERSNDKEDLC. Positions 895–905 are enriched in basic and acidic residues; that stretch reads ERKKKDEEKSS. The segment at 895–915 is disordered; that stretch reads ERKKKDEEKSSSKPSNNAKDE. Disulfide bonds link Cys916/Cys952 and Cys930/Cys949. Positions 967–977 are enriched in basic and acidic residues; the sequence is QEKPSHVRASQ. A disordered region spans residues 967-987; sequence QEKPSHVRASQEEDSPDSFSS. 3 disulfide bridges follow: Cys993–Cys1028, Cys1006–Cys1025, and Cys1014–Cys1046. The disordered stretch occupies residues 1041-1064; it reads RSTGKCEESSTPGTTAASMPPSDE.

Post-translationally, proteolytically processed by furin in individual domains (D1, D5, D6, D8 through D11, and D9 through D15) exhibiting various inhibitory potentials for multiple proteases. In terms of tissue distribution, highly expressed in the thymus and stratum corneum. Also found in the oral mucosa, parathyroid gland, Bartholin's glands, tonsils, and vaginal epithelium. Very low levels are detected in lung, kidney, and prostate.

Its subcellular location is the secreted. Functionally, serine protease inhibitor, probably important for the anti-inflammatory and/or antimicrobial protection of mucous epithelia. Contribute to the integrity and protective barrier function of the skin by regulating the activity of defense-activating and desquamation-involved proteases. Inhibits KLK5, it's major target, in a pH-dependent manner. Inhibits KLK7, KLK14 CASP14, and trypsin. This chain is Serine protease inhibitor Kazal-type 5 (SPINK5), found in Homo sapiens (Human).